The following is a 227-amino-acid chain: Urease subunit gamma/beta (227 aa).

Positions 1–101 (MRLTPTERDR…LAVVTDPIGG (101 aa)) are urease gamma. The urease beta stretch occupies residues 102–227 (GLGDQAPGAL…ACGYLGVEQR (126 aa)).

The protein in the N-terminal section; belongs to the urease gamma subunit family. This sequence in the C-terminal section; belongs to the urease beta subunit family. Heterohexamer of 3 UreC (alpha) and 3 UreAB (gamma/beta) subunits.

The protein resides in the cytoplasm. It catalyses the reaction urea + 2 H2O + H(+) = hydrogencarbonate + 2 NH4(+). It functions in the pathway nitrogen metabolism; urea degradation; CO(2) and NH(3) from urea (urease route): step 1/1. This is Urease subunit gamma/beta from Streptomyces avermitilis (strain ATCC 31267 / DSM 46492 / JCM 5070 / NBRC 14893 / NCIMB 12804 / NRRL 8165 / MA-4680).